Here is a 176-residue protein sequence, read N- to C-terminus: Nucleoside triphosphate/diphosphate phosphatase (176 aa).

Catalysis depends on Arg-23, which acts as the Proton donor. Residues Asn-87, Asp-103, Asp-105, Asp-107, Asp-120, and Glu-123 each coordinate Mg(2+).

Belongs to the Ntdp family. It depends on Mg(2+) as a cofactor.

The enzyme catalyses a ribonucleoside 5'-triphosphate + H2O = a ribonucleoside 5'-diphosphate + phosphate + H(+). It catalyses the reaction a ribonucleoside 5'-diphosphate + H2O = a ribonucleoside 5'-phosphate + phosphate + H(+). Functionally, has nucleoside phosphatase activity towards nucleoside triphosphates and nucleoside diphosphates. The protein is Nucleoside triphosphate/diphosphate phosphatase of Lactococcus lactis subsp. cremoris (strain MG1363).